The following is a 378-amino-acid chain: Cln5-like protein 1 (378 aa).

The N-terminal stretch at 1-20 is a signal peptide; it reads MNKIIIFILFLISILQSVRG. N-linked (GlcNAc...) asparagine glycosylation is found at asparagine 63, asparagine 93, asparagine 135, asparagine 181, asparagine 220, asparagine 226, asparagine 254, and asparagine 280. Residues 308–328 form a helical membrane-spanning segment; that stretch reads WIFIIILLSFTTVYLVGGILI.

This sequence belongs to the CLN5 family.

The protein resides in the membrane. The polypeptide is Cln5-like protein 1 (cln5la) (Dictyostelium discoideum (Social amoeba)).